The chain runs to 273 residues: Protein FAM210A (273 aa).

Low complexity predominate over residues 97–106; it reads SSSATSSGPP. Residues 97–116 form a disordered region; sequence SSSATSSGPPSEKKEDPDPL. The span at 107 to 116 shows a compositional bias: basic and acidic residues; the sequence is SEKKEDPDPL. The region spanning 118–230 is the DUF1279 domain; it reads DRSISLYQRF…GYMSTPPPVK (113 aa). The helical transmembrane segment at 137-157 threads the bilayer; sequence VLIPVHLITSAVWFGTFYYAA. Residues 230–269 are a coiled coil; that stretch reads KEYLQDKMEETKELLTEKMEETKDRLTEKLQETKGKVSLK. Residues 247-273 are disordered; it reads KMEETKDRLTEKLQETKGKVSLKKKVE.

It belongs to the FAM210 family. As to quaternary structure, interacts with ATAD3A.

Its subcellular location is the membrane. The protein resides in the mitochondrion. It localises to the cytoplasm. Functionally, may play a role in the structure and strength of both muscle and bone. The chain is Protein FAM210A (FAM210A) from Bos taurus (Bovine).